The sequence spans 115 residues: NAD(P)H-quinone oxidoreductase subunit M (115 aa).

This sequence belongs to the complex I NdhM subunit family. In terms of assembly, NDH-1 can be composed of about 15 different subunits; different subcomplexes with different compositions have been identified which probably have different functions.

The protein resides in the cellular thylakoid membrane. The enzyme catalyses a plastoquinone + NADH + (n+1) H(+)(in) = a plastoquinol + NAD(+) + n H(+)(out). The catalysed reaction is a plastoquinone + NADPH + (n+1) H(+)(in) = a plastoquinol + NADP(+) + n H(+)(out). In terms of biological role, NDH-1 shuttles electrons from an unknown electron donor, via FMN and iron-sulfur (Fe-S) centers, to quinones in the respiratory and/or the photosynthetic chain. The immediate electron acceptor for the enzyme in this species is believed to be plastoquinone. Couples the redox reaction to proton translocation, and thus conserves the redox energy in a proton gradient. Cyanobacterial NDH-1 also plays a role in inorganic carbon-concentration. This is NAD(P)H-quinone oxidoreductase subunit M from Synechococcus sp. (strain CC9902).